Reading from the N-terminus, the 446-residue chain is Amino-acid acetyltransferase (446 aa).

One can recognise an N-acetyltransferase domain in the interval 299-438; sequence EQVRDAEIDD…QKLYNFQRKS (140 aa).

The protein belongs to the acetyltransferase family. ArgA subfamily.

The protein localises to the cytoplasm. The catalysed reaction is L-glutamate + acetyl-CoA = N-acetyl-L-glutamate + CoA + H(+). It functions in the pathway amino-acid biosynthesis; L-arginine biosynthesis; N(2)-acetyl-L-ornithine from L-glutamate: step 1/4. In Aliivibrio fischeri (strain ATCC 700601 / ES114) (Vibrio fischeri), this protein is Amino-acid acetyltransferase.